Here is an 83-residue protein sequence, read N- to C-terminus: Small ribosomal subunit protein eS21 (83 aa).

Residue Met1 is modified to N-acetylmethionine. An N6-acetyllysine modification is found at Lys81.

This sequence belongs to the eukaryotic ribosomal protein eS21 family. In terms of assembly, component of the 40S small ribosomal subunit.

It is found in the cytoplasm. The protein localises to the cytosol. It localises to the rough endoplasmic reticulum. Its function is as follows. Component of the small ribosomal subunit. The ribosome is a large ribonucleoprotein complex responsible for the synthesis of proteins in the cell. This is Small ribosomal subunit protein eS21 (Rps21) from Mus musculus (Mouse).